Consider the following 222-residue polypeptide: UPF0758 protein YicR (222 aa).

Residues Pro-100–Ile-222 form the MPN domain. Zn(2+)-binding residues include His-171, His-173, and Asp-184. A JAMM motif motif is present at residues His-171–Asp-184.

Belongs to the UPF0758 family. YicR subfamily.

The sequence is that of UPF0758 protein YicR from Escherichia coli O81 (strain ED1a).